Here is a 423-residue protein sequence, read N- to C-terminus: Adenylosuccinate synthetase (423 aa).

GTP-binding positions include Gly-12–Lys-18 and Gly-40–Thr-42. The active-site Proton acceptor is Asp-13. 2 residues coordinate Mg(2+): Asp-13 and Gly-40. Residues Asp-13 to Lys-16, Asn-38 to His-41, Thr-129, Arg-143, Gln-224, Thr-239, and Arg-303 each bind IMP. His-41 serves as the catalytic Proton donor. A substrate-binding site is contributed by Ser-299–Arg-305. GTP contacts are provided by residues Arg-305, Lys-331–Asp-333, and Ser-412–Gly-414.

The protein belongs to the adenylosuccinate synthetase family. Homodimer. Mg(2+) is required as a cofactor.

The protein resides in the cytoplasm. The catalysed reaction is IMP + L-aspartate + GTP = N(6)-(1,2-dicarboxyethyl)-AMP + GDP + phosphate + 2 H(+). Its pathway is purine metabolism; AMP biosynthesis via de novo pathway; AMP from IMP: step 1/2. Plays an important role in the de novo pathway of purine nucleotide biosynthesis. Catalyzes the first committed step in the biosynthesis of AMP from IMP. The chain is Adenylosuccinate synthetase from Flavobacterium psychrophilum (strain ATCC 49511 / DSM 21280 / CIP 103535 / JIP02/86).